The chain runs to 213 residues: Orotate phosphoribosyltransferase (213 aa).

Lys26 is a 5-phospho-alpha-D-ribose 1-diphosphate binding site. 34–35 (FF) serves as a coordination point for orotate. Residues 72 to 73 (YK), Arg99, Lys100, Lys103, His105, and 124 to 132 (DDVITAGTA) each bind 5-phospho-alpha-D-ribose 1-diphosphate. Residues Thr128 and Arg156 each coordinate orotate.

It belongs to the purine/pyrimidine phosphoribosyltransferase family. PyrE subfamily. As to quaternary structure, homodimer. It depends on Mg(2+) as a cofactor.

The catalysed reaction is orotidine 5'-phosphate + diphosphate = orotate + 5-phospho-alpha-D-ribose 1-diphosphate. Its pathway is pyrimidine metabolism; UMP biosynthesis via de novo pathway; UMP from orotate: step 1/2. In terms of biological role, catalyzes the transfer of a ribosyl phosphate group from 5-phosphoribose 1-diphosphate to orotate, leading to the formation of orotidine monophosphate (OMP). The sequence is that of Orotate phosphoribosyltransferase from Escherichia coli O127:H6 (strain E2348/69 / EPEC).